An 89-amino-acid polypeptide reads, in one-letter code: Putative membrane protein insertion efficiency factor (89 aa).

This sequence belongs to the UPF0161 family.

The protein localises to the cell membrane. In terms of biological role, could be involved in insertion of integral membrane proteins into the membrane. This is Putative membrane protein insertion efficiency factor from Exiguobacterium sp. (strain ATCC BAA-1283 / AT1b).